Consider the following 400-residue polypeptide: Forkhead box protein A4-B (400 aa).

A DNA-binding region (fork-head) is located at residues 119-213 (KPPYSYISLI…ENGCYLRRQK (95 aa)). Residues 218–234 (ERSKSGEGERKGNKPGD) are compositionally biased toward basic and acidic residues. The tract at residues 218 to 290 (ERSKSGEGER…VGFSPTSEQA (73 aa)) is disordered. Polar residues-rich tracts occupy residues 249-258 (DCSSSRSPQA) and 267-277 (STGSSIHQATG).

Primarily expressed in the dorsal blastopore lip (Spemann organizer) of early gastrulae. At later stages, expressed in the dorsal mesoderm and the neural floor plate. In the dorsal mesoderm, expressed in the notochord but not in the presomitic mesoderm. Also expressed in the mid-brain area.

The protein localises to the nucleus. Transcriptional repressor involved in embryonic nervous system development. Plays a role in the induction and patterning of the anterior-posterior neural axis. Involved in the establishment of floor plate differentiation from neural plate cells during gastrulation. Binds the anf1 promoter sequence to restrict expression of anf1 to the anterior of the neural plate, thereby patterning the forebrain. Can bind to the HNF-3-alpha DNA target sequence. Cooperates with t/bra in a dose-dependent manner to specify dorsal mesoderm formation, including notochord. May be involved in the dorso-ventral patterning of the mesoderm. Binds to DNA via the target sequence 5'-[GA]TAAA[TC]A-3', with 5'-GTAAATA-3' being the preferred binding site. This is Forkhead box protein A4-B (foxa4-b) from Xenopus laevis (African clawed frog).